The primary structure comprises 272 residues: 2-amino-3,7-dideoxy-D-threo-hept-6-ulosonate synthase (272 aa).

Asp33 (proton acceptor) is an active-site residue. Residues 33–37 and 153–155 contribute to the 1-deoxy-D-threo-hexo-2,5-diulose 6-phosphate site; these read DHGVS and YPR. Residue Tyr153 is the Proton donor of the active site. Lys184 (schiff-base intermediate with substrate) is an active-site residue. 1-deoxy-D-threo-hexo-2,5-diulose 6-phosphate contacts are provided by residues 209–210 and 237–238; these read GG and GR.

The protein belongs to the DeoC/FbaB aldolase family. ADHS subfamily. Homodecamer.

The catalysed reaction is 1-deoxy-D-threo-hexo-2,5-diulose 6-phosphate + L-aspartate 4-semialdehyde = 2,3-dioxopropyl phosphate + 2-amino-2,3,7-trideoxy-D-lyxo-hept-6-ulosonate. Catalyzes a transaldol reaction between 6-deoxy-5-ketofructose 1-phosphate (DKFP) and L-aspartate semialdehyde (ASA) with an elimination of hydroxypyruvaldehyde phosphate to yield 2-amino-3,7-dideoxy-D-threo-hept-6-ulosonate (ADH). Plays a key role in an alternative pathway of the biosynthesis of 3-dehydroquinate (DHQ), which is involved in the canonical pathway for the biosynthesis of aromatic amino acids. This chain is 2-amino-3,7-dideoxy-D-threo-hept-6-ulosonate synthase, found in Methanococcus maripaludis (strain C5 / ATCC BAA-1333).